Consider the following 142-residue polypeptide: Large ribosomal subunit protein uL16 (142 aa).

The protein belongs to the universal ribosomal protein uL16 family. As to quaternary structure, part of the 50S ribosomal subunit.

Functionally, binds 23S rRNA and is also seen to make contacts with the A and possibly P site tRNAs. This chain is Large ribosomal subunit protein uL16, found in Thermotoga maritima (strain ATCC 43589 / DSM 3109 / JCM 10099 / NBRC 100826 / MSB8).